Reading from the N-terminus, the 558-residue chain is Membrane protein insertase YidC (558 aa).

5 helical membrane-spanning segments follow: residues 3-23 (IKRT…FDNW), 364-384 (FVGN…AVFF), 438-458 (LPVV…LASV), 477-497 (PYFI…KLNP), and 508-528 (MMFM…GLVL).

The protein belongs to the OXA1/ALB3/YidC family. Type 1 subfamily. As to quaternary structure, interacts with the Sec translocase complex via SecD. Specifically interacts with transmembrane segments of nascent integral membrane proteins during membrane integration.

Its subcellular location is the cell inner membrane. Its function is as follows. Required for the insertion and/or proper folding and/or complex formation of integral membrane proteins into the membrane. Involved in integration of membrane proteins that insert both dependently and independently of the Sec translocase complex, as well as at least some lipoproteins. Aids folding of multispanning membrane proteins. In Burkholderia pseudomallei (strain K96243), this protein is Membrane protein insertase YidC.